Consider the following 484-residue polypeptide: uncharacterized protein (484 aa).

Residues 334 to 484 (IIIRQITDND…ENEWIYEVNL (151 aa)) form the N-acetyltransferase domain.

This is an uncharacterized protein from Methanocaldococcus jannaschii (strain ATCC 43067 / DSM 2661 / JAL-1 / JCM 10045 / NBRC 100440) (Methanococcus jannaschii).